The chain runs to 444 residues: Glutamate--tRNA ligase 1 (444 aa).

The 'HIGH' region motif lies at 7 to 17 (PSPTGYLHVGN). The 'KMSKS' region signature appears at 238 to 242 (KISKR). An ATP-binding site is contributed by Lys241.

The protein belongs to the class-I aminoacyl-tRNA synthetase family. Glutamate--tRNA ligase type 1 subfamily. In terms of assembly, monomer.

The protein localises to the cytoplasm. The enzyme catalyses tRNA(Glu) + L-glutamate + ATP = L-glutamyl-tRNA(Glu) + AMP + diphosphate. Catalyzes the attachment of glutamate to tRNA(Glu) in a two-step reaction: glutamate is first activated by ATP to form Glu-AMP and then transferred to the acceptor end of tRNA(Glu). The protein is Glutamate--tRNA ligase 1 of Wolbachia pipientis subsp. Culex pipiens (strain wPip).